Reading from the N-terminus, the 215-residue chain is Protein-L-isoaspartate O-methyltransferase (215 aa).

Ser62 is an active-site residue.

It belongs to the methyltransferase superfamily. L-isoaspartyl/D-aspartyl protein methyltransferase family.

It is found in the cytoplasm. The enzyme catalyses [protein]-L-isoaspartate + S-adenosyl-L-methionine = [protein]-L-isoaspartate alpha-methyl ester + S-adenosyl-L-homocysteine. Catalyzes the methyl esterification of L-isoaspartyl residues in peptides and proteins that result from spontaneous decomposition of normal L-aspartyl and L-asparaginyl residues. It plays a role in the repair and/or degradation of damaged proteins. The sequence is that of Protein-L-isoaspartate O-methyltransferase from Ruegeria pomeroyi (strain ATCC 700808 / DSM 15171 / DSS-3) (Silicibacter pomeroyi).